Consider the following 200-residue polypeptide: GTP cyclohydrolase-2 (200 aa).

52 to 56 contacts GTP; that stretch reads RIHSE. Zn(2+) contacts are provided by Cys57, Cys68, and Cys70. GTP-binding positions include Gln73, 94-96, and Thr116; that span reads EGR. The active-site Proton acceptor is the Asp128. Arg130 serves as the catalytic Nucleophile. Residues Thr151 and Lys156 each coordinate GTP.

This sequence belongs to the GTP cyclohydrolase II family. The cofactor is Zn(2+).

It catalyses the reaction GTP + 4 H2O = 2,5-diamino-6-hydroxy-4-(5-phosphoribosylamino)-pyrimidine + formate + 2 phosphate + 3 H(+). It functions in the pathway cofactor biosynthesis; riboflavin biosynthesis; 5-amino-6-(D-ribitylamino)uracil from GTP: step 1/4. Functionally, catalyzes the conversion of GTP to 2,5-diamino-6-ribosylamino-4(3H)-pyrimidinone 5'-phosphate (DARP), formate and pyrophosphate. This is GTP cyclohydrolase-2 from Psychromonas ingrahamii (strain DSM 17664 / CCUG 51855 / 37).